A 208-amino-acid chain; its full sequence is MKVKVQTLDAKASGDIELNDEVFAVEPRADILARVVQWQLHNRRAPARAARERSDVARTGKKFGRQKGGGTARHGDRRAPVFIGGGKAHGPRARVFESSLNKKVRALGLKMALSSKAKDGKLVVVDTLELKDAKTKALIAKIGKLGFGATALVIDGEAVDNGFQLASSNIHTINVLPAIGANVYDILKHETLVLTRAAVEKLEARFNG.

Residues alanine 47–glycine 84 form a disordered region. A compositionally biased stretch (basic and acidic residues) spans alanine 49–arginine 58.

This sequence belongs to the universal ribosomal protein uL4 family. Part of the 50S ribosomal subunit.

One of the primary rRNA binding proteins, this protein initially binds near the 5'-end of the 23S rRNA. It is important during the early stages of 50S assembly. It makes multiple contacts with different domains of the 23S rRNA in the assembled 50S subunit and ribosome. In terms of biological role, forms part of the polypeptide exit tunnel. This Rhizorhabdus wittichii (strain DSM 6014 / CCUG 31198 / JCM 15750 / NBRC 105917 / EY 4224 / RW1) (Sphingomonas wittichii) protein is Large ribosomal subunit protein uL4.